Reading from the N-terminus, the 243-residue chain is tRNA pseudouridine synthase A (243 aa).

Asp-53 (nucleophile) is an active-site residue. Tyr-111 serves as a coordination point for substrate.

This sequence belongs to the tRNA pseudouridine synthase TruA family. Homodimer.

It catalyses the reaction uridine(38/39/40) in tRNA = pseudouridine(38/39/40) in tRNA. In terms of biological role, formation of pseudouridine at positions 38, 39 and 40 in the anticodon stem and loop of transfer RNAs. This is tRNA pseudouridine synthase A from Chlorobium phaeovibrioides (strain DSM 265 / 1930) (Prosthecochloris vibrioformis (strain DSM 265)).